The chain runs to 215 residues: Probable nicotinate-nucleotide adenylyltransferase (215 aa).

It belongs to the NadD family.

The enzyme catalyses nicotinate beta-D-ribonucleotide + ATP + H(+) = deamido-NAD(+) + diphosphate. The protein operates within cofactor biosynthesis; NAD(+) biosynthesis; deamido-NAD(+) from nicotinate D-ribonucleotide: step 1/1. In terms of biological role, catalyzes the reversible adenylation of nicotinate mononucleotide (NaMN) to nicotinic acid adenine dinucleotide (NaAD). This Shewanella putrefaciens (strain CN-32 / ATCC BAA-453) protein is Probable nicotinate-nucleotide adenylyltransferase.